The primary structure comprises 498 residues: ATP synthase subunit beta, chloroplastic (498 aa).

172-179 provides a ligand contact to ATP; that stretch reads GGAGVGKT.

Belongs to the ATPase alpha/beta chains family. F-type ATPases have 2 components, CF(1) - the catalytic core - and CF(0) - the membrane proton channel. CF(1) has five subunits: alpha(3), beta(3), gamma(1), delta(1), epsilon(1). CF(0) has four main subunits: a(1), b(1), b'(1) and c(9-12).

It is found in the plastid. The protein resides in the chloroplast thylakoid membrane. The catalysed reaction is ATP + H2O + 4 H(+)(in) = ADP + phosphate + 5 H(+)(out). Functionally, produces ATP from ADP in the presence of a proton gradient across the membrane. The catalytic sites are hosted primarily by the beta subunits. This Morus indica (Mulberry) protein is ATP synthase subunit beta, chloroplastic.